Consider the following 376-residue polypeptide: E3 ubiquitin-protein ligase RNF34 (376 aa).

The segment at 56–107 (EGPNIVCKACGLSFSVFRKKHVCCDCKKDFCSLCSVSQENLRRCSTCHLLQE) adopts an FYVE-type zinc-finger fold. The SAP 1 domain maps to 115-134 (LMRLKVKDLRQYLLLRNIPT). The residue at position 169 (serine 169) is a Phosphoserine. Positions 216 to 256 (IASANTDDDDDDDDDDDDDEDDDDEQEEEEQNPGLSKKKAR) are disordered. Residues 221–246 (TDDDDDDDDDDDDDEDDDDEQEEEEQ) are compositionally biased toward acidic residues. 2 positions are modified to phosphoserine: serine 258 and serine 260. The region spanning 268-282 (VEGMSVRQLKEILAR) is the SAP 2 domain. The RING-type zinc finger occupies 329-364 (CRICMDAVIDCVLLECGHMVTCTKCGKRMSECPICR).

Interacts with CASP8 and CASP10. Interacts with p53/TP53; involved in p53/TP53 ubiquitination. Interacts (via RING-type zinc finger) with MDM2; the interaction stabilizes MDM2. Interacts (via RING-type zinc finger) with PPARGC1A. Interacts with NOD1. In terms of processing, autoubiquitinated (in vitro). Post-translationally, proteolytically cleaved by caspases upon induction of apoptosis by TNF.

The protein localises to the cell membrane. Its subcellular location is the endomembrane system. It localises to the nucleus. The protein resides in the nucleus speckle. It is found in the cytoplasm. The protein localises to the cytosol. It catalyses the reaction S-ubiquitinyl-[E2 ubiquitin-conjugating enzyme]-L-cysteine + [acceptor protein]-L-lysine = [E2 ubiquitin-conjugating enzyme]-L-cysteine + N(6)-ubiquitinyl-[acceptor protein]-L-lysine.. It participates in protein modification; protein ubiquitination. E3 ubiquitin-protein ligase that regulates several biological processes through the ubiquitin-mediated proteasomal degradation of various target proteins. Ubiquitinates the caspases CASP8 and CASP10, promoting their proteasomal degradation, to negatively regulate cell death downstream of death domain receptors in the extrinsic pathway of apoptosis. May mediate 'Lys-48'-linked polyubiquitination of RIPK1 and its subsequent proteasomal degradation thereby indirectly regulating the tumor necrosis factor-mediated signaling pathway. Negatively regulates p53/TP53 through its direct ubiquitination and targeting to proteasomal degradation. Indirectly, may also negatively regulate p53/TP53 through ubiquitination and degradation of SFN. Mediates PPARGC1A proteasomal degradation probably through ubiquitination thereby indirectly regulating the metabolism of brown fat cells. Possibly involved in innate immunity, through 'Lys-48'-linked polyubiquitination of NOD1 and its subsequent proteasomal degradation. The protein is E3 ubiquitin-protein ligase RNF34 of Mus musculus (Mouse).